Here is a 201-residue protein sequence, read N- to C-terminus: 3-isopropylmalate dehydratase small subunit (201 aa).

This sequence belongs to the LeuD family. LeuD type 1 subfamily. In terms of assembly, heterodimer of LeuC and LeuD.

It carries out the reaction (2R,3S)-3-isopropylmalate = (2S)-2-isopropylmalate. It functions in the pathway amino-acid biosynthesis; L-leucine biosynthesis; L-leucine from 3-methyl-2-oxobutanoate: step 2/4. Catalyzes the isomerization between 2-isopropylmalate and 3-isopropylmalate, via the formation of 2-isopropylmaleate. In Enterobacter sp. (strain 638), this protein is 3-isopropylmalate dehydratase small subunit.